Reading from the N-terminus, the 60-residue chain is MIYQVVLLLLVSPAPVSAAGCNPDCTGIQCGWPRCPGGQNPVMDKCVSCCPFCPPKSAQG.

A signal peptide spans Met1–Ala19.

Contains 4 disulfide bonds. In terms of tissue distribution, expressed by the venom gland.

It is found in the secreted. Functionally, insect-specific toxin. Blocks voltage-gated potassium and sodium channels. In Trichonephila clavata (Joro spider), this protein is Insect toxin mu-NPTX-Nc1a.